Reading from the N-terminus, the 705-residue chain is Probable cyclic nucleotide-gated ion channel 16 (705 aa).

The Cytoplasmic segment spans residues 1 to 57 (MSNLHLYTSARFRNFPTTFSLRHHHNDPNNQRRRSIFSKLRDKTLDPGGDLITRWNH). The helical transmembrane segment at 58 to 78 (IFLITCLLALFLDPLYFYLPI) threads the bilayer. Topologically, residues 79 to 91 (VQAGTACMSIDVR) are extracellular. A helical membrane pass occupies residues 92–112 (FGIFVTCFRNLADLSFLIHIL). The Cytoplasmic portion of the chain corresponds to 113-147 (LKFKTAFVSKSSRVFGRGELVMDRREIAIRYLKSE). A helical membrane pass occupies residues 148–168 (FVIDLAATLPLPQIMIWFVIP). Residues 169–180 (NAGEFRYAAHQN) are Extracellular-facing. The helical transmembrane segment at 181 to 201 (HTLSLIVLIQYVPRFLVMLPL) threads the bilayer. Over 202–222 (NRRIIKATGVAAKTAWSGAAY) the chain is Cytoplasmic. A helical membrane pass occupies residues 223–243 (NLILYLLVSHVLGSVWYVLSI). Over 244-353 (QRQHECWRRE…LAASTLSSET (110 aa)) the chain is Extracellular. Residues 354 to 374 (IFSCFICVAGLVFFSHLIGNV) traverse the membrane as a helical segment. Residues 375–705 (QNYLQSTTAR…MFKPEDPGFF (331 aa)) are Cytoplasmic-facing. Residues 457 to 580 (FFAQ…HSKK) and Glu528 each bind a nucleoside 3',5'-cyclic phosphate. Residues 573–588 (FRRLHSKKLQHAFRYY) are calmodulin-binding. One can recognise an IQ domain in the interval 593–622 (RAWGTCFIQAAWRRYMKRKLAMELARQEEE). Disordered regions lie at residues 636–655 (EEDM…SNNQ) and 672–705 (RGVL…PGFF). Low complexity predominate over residues 642–655 (SNNNNGDENSSNNQ).

This sequence belongs to the cyclic nucleotide-gated cation channel (TC 1.A.1.5) family. In terms of assembly, homotetramer or heterotetramer.

The protein resides in the cell membrane. Putative cyclic nucleotide-gated ion channel. The sequence is that of Probable cyclic nucleotide-gated ion channel 16 (CNGC16) from Arabidopsis thaliana (Mouse-ear cress).